Here is a 284-residue protein sequence, read N- to C-terminus: Shikimate dehydrogenase (NADP(+)) (284 aa).

Residues 20–22 (SIS) and serine 67 each bind shikimate. The active-site Proton acceptor is the lysine 71. Shikimate is bound by residues asparagine 92 and aspartate 107. NADP(+)-binding positions include 129–133 (GAGGA) and valine 227. Tyrosine 229 lines the shikimate pocket. NADP(+) is bound at residue glycine 250.

The protein belongs to the shikimate dehydrogenase family. As to quaternary structure, homodimer.

It catalyses the reaction shikimate + NADP(+) = 3-dehydroshikimate + NADPH + H(+). It participates in metabolic intermediate biosynthesis; chorismate biosynthesis; chorismate from D-erythrose 4-phosphate and phosphoenolpyruvate: step 4/7. In terms of biological role, involved in the biosynthesis of the chorismate, which leads to the biosynthesis of aromatic amino acids. Catalyzes the reversible NADPH linked reduction of 3-dehydroshikimate (DHSA) to yield shikimate (SA). The chain is Shikimate dehydrogenase (NADP(+)) from Streptococcus sanguinis (strain SK36).